A 401-amino-acid polypeptide reads, in one-letter code: uncharacterized protein (401 aa).

K242 carries the post-translational modification N6-(pyridoxal phosphate)lysine.

The protein belongs to the class-I pyridoxal-phosphate-dependent aminotransferase family. In terms of assembly, homodimer. Requires pyridoxal 5'-phosphate as cofactor.

It is found in the cytoplasm. This is an uncharacterized protein from Saccharolobus solfataricus (strain ATCC 35092 / DSM 1617 / JCM 11322 / P2) (Sulfolobus solfataricus).